The primary structure comprises 125 residues: Large ribosomal subunit protein bL20 (125 aa).

This sequence belongs to the bacterial ribosomal protein bL20 family.

Functionally, binds directly to 23S ribosomal RNA and is necessary for the in vitro assembly process of the 50S ribosomal subunit. It is not involved in the protein synthesizing functions of that subunit. The polypeptide is Large ribosomal subunit protein bL20 (Methylobacterium nodulans (strain LMG 21967 / CNCM I-2342 / ORS 2060)).